The following is a 294-amino-acid chain: 33 kDa chaperonin (294 aa).

Disulfide bonds link Cys-231/Cys-233 and Cys-264/Cys-267.

The protein belongs to the HSP33 family. In terms of processing, under oxidizing conditions two disulfide bonds are formed involving the reactive cysteines. Under reducing conditions zinc is bound to the reactive cysteines and the protein is inactive.

It localises to the cytoplasm. In terms of biological role, redox regulated molecular chaperone. Protects both thermally unfolding and oxidatively damaged proteins from irreversible aggregation. Plays an important role in the bacterial defense system toward oxidative stress. The sequence is that of 33 kDa chaperonin from Aeromonas salmonicida (strain A449).